The sequence spans 428 residues: Serine--tRNA ligase (428 aa).

L-serine is bound at residue 233 to 235 (TAE). An ATP-binding site is contributed by 264–266 (RRE). Glu287 is an L-serine binding site. 351–354 (EVSS) provides a ligand contact to ATP. Position 387 (Ser387) interacts with L-serine.

Belongs to the class-II aminoacyl-tRNA synthetase family. Type-1 seryl-tRNA synthetase subfamily. Homodimer. The tRNA molecule binds across the dimer.

It localises to the cytoplasm. It carries out the reaction tRNA(Ser) + L-serine + ATP = L-seryl-tRNA(Ser) + AMP + diphosphate + H(+). The enzyme catalyses tRNA(Sec) + L-serine + ATP = L-seryl-tRNA(Sec) + AMP + diphosphate + H(+). The protein operates within aminoacyl-tRNA biosynthesis; selenocysteinyl-tRNA(Sec) biosynthesis; L-seryl-tRNA(Sec) from L-serine and tRNA(Sec): step 1/1. Its function is as follows. Catalyzes the attachment of serine to tRNA(Ser). Is also able to aminoacylate tRNA(Sec) with serine, to form the misacylated tRNA L-seryl-tRNA(Sec), which will be further converted into selenocysteinyl-tRNA(Sec). The polypeptide is Serine--tRNA ligase (Salinibacter ruber (strain DSM 13855 / M31)).